A 72-amino-acid chain; its full sequence is Putative membrane protein insertion efficiency factor (72 aa).

Belongs to the UPF0161 family.

The protein localises to the cell inner membrane. Its function is as follows. Could be involved in insertion of integral membrane proteins into the membrane. The chain is Putative membrane protein insertion efficiency factor from Myxococcus xanthus (strain DK1622).